The chain runs to 411 residues: MNNNKKTKKRFSLIIILLIVIAGAIAYWQYSSNNSAPPVSKDTPTANTPNRSTAGSRRPPMPPVQVATSAQEDVPQFLTALGTVKAVNSVTVTSRVEGQLMALHFTEGQQVNQGDLLAEIDPRPFEVQLAQAKGQLAKDQATLANARLDLARYQKLAKTHLVSQQELDNQAALVKQSEASISIDKAAINNAQLQLTYSKITAPISGRVGLKQVDVGNYISGGSSTPIVVINQMDPVDVLFTLPEQDLSQVILARKNNPTLPVIALDRNNKIELAQGALFSVDNQIDATTGTIKLKARFPQQESTLFPNQFVNIRLYVTTLEKAVVIPNAALQMGNEGHFVWVVDEENKVSKLAVEVASQNADKVVIASGLSANQRVVTDGVDRLTQGAKVEIVTPLAPKAKTTDPVVAEKA.

Residues 1 to 26 (MNNNKKTKKRFSLIIILLIVIAGAIA) form the signal peptide. A compositionally biased stretch (polar residues) spans 35–55 (SAPPVSKDTPTANTPNRSTAG). Residues 35–64 (SAPPVSKDTPTANTPNRSTAGSRRPPMPPV) form a disordered region.

This sequence belongs to the membrane fusion protein (MFP) (TC 8.A.1) family. Part of a tripartite efflux system composed of MdtA, MdtB and MdtC.

It localises to the cell inner membrane. This Proteus mirabilis (strain HI4320) protein is Multidrug resistance protein MdtA.